The following is a 952-amino-acid chain: Chaperone protein ClpC2, chloroplastic (952 aa).

Residues 1–45 (MAWSIALLTPPFFGPGRHVQAKEYREPRGCVMKMSSLKAPVLRIQ) constitute a chloroplast transit peptide. Residues 115–257 (FERFTEKAIK…RTQVIRMVGE (143 aa)) form the Clp R domain. Repeat stretches follow at residues 118–183 (FTEK…IGRG) and 193–257 (FTPR…MVGE). The i stretch occupies residues 278 to 525 (LEEYGTNLTK…RVRLRHAQLP (248 aa)). An ATP-binding site is contributed by 323-330 (GEPGVGKT). Positions 532-567 (EKQLRQITKEKNEAVRSQDFEMAGSHRDREIELKAE) constitute a UVR domain. An II region spans residues 592-783 (VTESDIQHIV…LLIMTSNVGS (192 aa)). 666–673 (GPTGVGKS) provides a ligand contact to ATP.

This sequence belongs to the ClpA/ClpB family. ClpC subfamily. As to quaternary structure, homodimer and homohexamer. Hexamerization upon addition of ATP. Interacts with CLPT1. Interacts with CLPS1. Stably associated with the import machinery. Interacts with CLPF. It depends on Mg(2+) as a cofactor. As to expression, expressed at low levels in roots and inflorescences. Expressed at very low levels in rosette leaves. Expressed in photosynthetic green tissues with high levels in young, developing leaf tissues.

Its subcellular location is the plastid. The protein resides in the chloroplast stroma. The protein localises to the chloroplast membrane. It carries out the reaction ATP + H2O = ADP + phosphate + H(+). Molecular chaperone. May act as a suppressor of FtsH-mediated thylakoid membrane biogenesis and may enhance photoinhibition. Seems not involved in chloroplastic protein import. Probable component of the TIC-associated stromal import motor involved in inner membrane translocation. Has an ATPase activity, but no ADPase activity. Interacts with transit peptides with a positional preference. Localization of the signal sequence at the N-terminal end of a protein seems mandatory for interaction to take place. The sequence is that of Chaperone protein ClpC2, chloroplastic from Arabidopsis thaliana (Mouse-ear cress).